Here is a 565-residue protein sequence, read N- to C-terminus: MNQTRVLLIFSWLTVATLLWMDWGKNKNETLEISASQNLGVDSNLELEHAVPQINAGAVPVQKDSQLIAVAPKVPVINVKTDVLQLKLDGFSVLAADLLRFPQSKDRGAKPIKLLTDDPNYPYSATTGWVSQSNSPVPNLSTFLPEQPGVSYKLANDQDRLVVPFVWTAANGVSIRRTFTFERGRYAILIRDEIRNGGETPWNAYVFRKLSRVPIPNILNRAMTNPDSFSFNGAVWYSEKGGYERRAFKDYMNDGGLNREIGGGWIALLQHHFFTAWIPQKDQASLYLLAQNGSRDIAELRGPAFTVAPGQSTTTEARLWVGPKLVEQITKEHVKGLDRVVDYSRFQLMALIGQGLFWILSHLNSLLHNWGWAIVGLVVLLRIAMYPLSAAQYKSAAKMRKFQPRLQQLKERYGEDRQKFQQAMMELYKKEKINPMGGCFPILIQMPIFFALYWVLVESVELRQAPWLGWIQDLTTRDPYFILPLLNIVIMWATQKLTPTPAGMDPIAGKMMQVMPLIFGVMMAFVPSGLALYWVINGGLNLLIQWWMIRQHADFSRKRSRGNIK.

The next 6 membrane-spanning stretches (helical) occupy residues Val-6 to Asn-26, Leu-348 to His-368, Trp-370 to Ala-390, Gly-437 to Val-457, Pro-479 to Pro-499, and Pro-516 to Ile-536.

It belongs to the OXA1/ALB3/YidC family. Type 1 subfamily. In terms of assembly, interacts with the Sec translocase complex via SecD. Specifically interacts with transmembrane segments of nascent integral membrane proteins during membrane integration.

It is found in the cell inner membrane. Required for the insertion and/or proper folding and/or complex formation of integral membrane proteins into the membrane. Involved in integration of membrane proteins that insert both dependently and independently of the Sec translocase complex, as well as at least some lipoproteins. Aids folding of multispanning membrane proteins. In Xylella fastidiosa (strain 9a5c), this protein is Membrane protein insertase YidC.